The chain runs to 646 residues: Macrolide export ATP-binding/permease protein MacB (646 aa).

One can recognise an ABC transporter domain in the interval 7–245; it reads IRLEDICKTF…EATLQPHEEI (239 aa). ATP is bound at residue 43–50; that stretch reads GASGSGKS. 4 helical membrane passes run 274–294, 528–548, 572–592, and 609–629; these read VLTL…LAIG, VAAI…LVSV, FIIE…ILGL, and FGPV…FGFL.

Belongs to the ABC transporter superfamily. Macrolide exporter (TC 3.A.1.122) family. In terms of assembly, homodimer.

It is found in the cell inner membrane. Its function is as follows. Non-canonical ABC transporter that contains transmembrane domains (TMD), which form a pore in the inner membrane, and an ATP-binding domain (NBD), which is responsible for energy generation. Confers resistance against macrolides. This chain is Macrolide export ATP-binding/permease protein MacB, found in Brucella abortus (strain 2308).